The following is a 531-amino-acid chain: Membrane protein insertase YidC (531 aa).

The next 4 membrane-spanning stretches (helical) occupy residues 5–25 (ALIA…LFSP), 343–363 (GNYG…FYPL), 415–435 (LPML…MFSI), and 489–509 (PVVF…YWLV).

The protein belongs to the OXA1/ALB3/YidC family. Type 1 subfamily. In terms of assembly, interacts with the Sec translocase complex via SecD. Specifically interacts with transmembrane segments of nascent integral membrane proteins during membrane integration.

Its subcellular location is the cell inner membrane. Functionally, required for the insertion and/or proper folding and/or complex formation of integral membrane proteins into the membrane. Involved in integration of membrane proteins that insert both dependently and independently of the Sec translocase complex, as well as at least some lipoproteins. Aids folding of multispanning membrane proteins. The protein is Membrane protein insertase YidC of Geobacter sulfurreducens (strain ATCC 51573 / DSM 12127 / PCA).